Consider the following 109-residue polypeptide: Thiosulfate sulfurtransferase GlpE (109 aa).

The Rhodanese domain occupies 16-104 (REQGAVVVDI…WRSTYPAETA (89 aa)). Residue Cys-64 is the Cysteine persulfide intermediate of the active site.

The protein belongs to the GlpE family.

It is found in the cytoplasm. It catalyses the reaction thiosulfate + hydrogen cyanide = thiocyanate + sulfite + 2 H(+). The catalysed reaction is thiosulfate + [thioredoxin]-dithiol = [thioredoxin]-disulfide + hydrogen sulfide + sulfite + 2 H(+). In terms of biological role, transferase that catalyzes the transfer of sulfur from thiosulfate to thiophilic acceptors such as cyanide or dithiols. May function in a CysM-independent thiosulfate assimilation pathway by catalyzing the conversion of thiosulfate to sulfite, which can then be used for L-cysteine biosynthesis. In Pseudomonas fluorescens (strain ATCC BAA-477 / NRRL B-23932 / Pf-5), this protein is Thiosulfate sulfurtransferase GlpE.